The sequence spans 885 residues: DNA mismatch repair protein MutS (885 aa).

640–647 (GPNMGGKS) provides a ligand contact to ATP.

It belongs to the DNA mismatch repair MutS family.

In terms of biological role, this protein is involved in the repair of mismatches in DNA. It is possible that it carries out the mismatch recognition step. This protein has a weak ATPase activity. The chain is DNA mismatch repair protein MutS from Variovorax paradoxus (strain S110).